We begin with the raw amino-acid sequence, 237 residues long: Ribose-5-phosphate isomerase A (237 aa).

Residues 33 to 36, 90 to 93, and 103 to 106 contribute to the substrate site; these read TGST, DGAD, and KGGG. Glu-112 serves as the catalytic Proton acceptor. Substrate is bound at residue Lys-130.

The protein belongs to the ribose 5-phosphate isomerase family. Homodimer.

The enzyme catalyses aldehydo-D-ribose 5-phosphate = D-ribulose 5-phosphate. The protein operates within carbohydrate degradation; pentose phosphate pathway; D-ribose 5-phosphate from D-ribulose 5-phosphate (non-oxidative stage): step 1/1. In terms of biological role, catalyzes the reversible conversion of ribose-5-phosphate to ribulose 5-phosphate. The chain is Ribose-5-phosphate isomerase A from Trichodesmium erythraeum (strain IMS101).